The primary structure comprises 506 residues: BTB/POZ domain and ankyrin repeat-containing protein NPR5 (506 aa).

Residues 23 to 131 (SDVTFSVEGR…LYSGQVSLVP (109 aa)) form the BTB domain. The C2HC NPR-type zinc-finger motif lies at 137-151 (RPGCGERGCWHTHCA). Residues C140, C145, H147, and C150 each contribute to the Zn(2+) site. ANK repeat units follow at residues 278-306 (HKIRRMRRALDSSDVELVKLMVMGEGLNL), 307-337 (DDALALHYAVENCSREVVKALLELGAADVNH), 342-371 (AGKTPLHVAAEMVCPDMVAVLLDHHADPNV), and 375-409 (DGVTPLDILRTLTSDFLFKGAVPGLAHIEPNKLRL). A disordered region spans residues 481-506 (KMNDGGDGDDGGSRGPSSLFSPHGFP).

It belongs to the plant 'ANKYRIN-BTB/POZ' family. 'NOOT-BOP-COCH-like' (NBCL) subfamily. As to quaternary structure, homodimer. Interacts with TGAL5, TGAL7, TGAL8 and TGAL11.

It localises to the nucleus. Its subcellular location is the cytoplasm. It participates in protein modification; protein ubiquitination. Its function is as follows. May act as a substrate-specific adapter of an E3 ubiquitin-protein ligase complex (CUL3-RBX1-BTB) which mediates the ubiquitination and subsequent proteasomal degradation of target proteins. Transcriptional co-regulator involved in the promotion of leaf and floral meristem fate and determinacy. Required for the abscission of senescent organs, probably by regulating the cell wall disorganization in abscission zones (AZs, e.g. pulvini at the base of leaves). Maybe involved in defense response against pathogens. The polypeptide is BTB/POZ domain and ankyrin repeat-containing protein NPR5 (Oryza sativa subsp. japonica (Rice)).